A 570-amino-acid polypeptide reads, in one-letter code: Sulfite reductase [NADPH] hemoprotein beta-component (570 aa).

[4Fe-4S] cluster contacts are provided by C434, C440, C479, and C483. Residue C483 participates in siroheme binding.

This sequence belongs to the nitrite and sulfite reductase 4Fe-4S domain family. As to quaternary structure, alpha(8)-beta(8). The alpha component is a flavoprotein, the beta component is a hemoprotein. Siroheme is required as a cofactor. The cofactor is [4Fe-4S] cluster.

It catalyses the reaction hydrogen sulfide + 3 NADP(+) + 3 H2O = sulfite + 3 NADPH + 4 H(+). Its pathway is sulfur metabolism; hydrogen sulfide biosynthesis; hydrogen sulfide from sulfite (NADPH route): step 1/1. In terms of biological role, component of the sulfite reductase complex that catalyzes the 6-electron reduction of sulfite to sulfide. This is one of several activities required for the biosynthesis of L-cysteine from sulfate. The polypeptide is Sulfite reductase [NADPH] hemoprotein beta-component (Shigella dysenteriae serotype 1 (strain Sd197)).